We begin with the raw amino-acid sequence, 1038 residues long: MAGSHVDMAPASTTEGTGEKPGPTAPAPTPAAQYECGECGKSFRWSSRLLHHQRTHTGERPYKCPDCPKAFKGSSALLYHQRGHTGERPYQCPDCPKAFKRSSLLQIHRSVHTGLRAFTCGQCGLAFKWSSHYQYHLRQHTGERPYPCPDCPKAFKNSSSLRRHRHVHTGERPYTCGICGKSFTQSTNLRQHQRVHTGERPFRCPLCPKTFTHSSNLLLHHRTHGPAPGPAPAPAPPGETSRADTKVLVSDAYLQPRSPPEPPAPPPQPPPVVPELFLAAAETTVELVYRCDGCEQGFSSEELLLEHQPCPGPPVATQSQDVPAELPQADSALPQPPPATPGPPNFACLPCGKSFRTVAGLSRHQHSHGAASGQAFRCGSCDGAFPQLASLLAHQQCHVEEAAAGRPPPQAEVAEVTCPQEPVAPATPAPPPPPPPAPVVSAERPYKCAECGKAFKGSSGLRYHLRDHTGERPYQCGECGKAFKRSSLLAIHQRVHTGLRAFTCGQCGLTFKWSSHYQYHLRLHSGERPYACTECGKAFRNTSCLRRHRHVHTGERPHSCSVCGKSFAQTSNLRQHQRVHTGERPFRCPLCPKTFTHSSNLLLHQRTHSAERPFACPICGRGFVMAAYLQRHLRTHTPATTTSGTTGSAVASQPPAPLAAAPTPLAAQDVHVLPNLQATLSLEVAGGTAQPTPPGPAAPSSQTFLLVQTAQGLQLIPSSVQSPTPPPPPPPPKVILLPPASAGGPGSGAARPGPRSVGKAGQGTGVVWFPGPGGLGLQGGANAGASGGGQSLIVLQNVGSGETGPQEVSGVQLQPAQEVATVQLQPAQEVTTVQLQPAQEVTTVQLQPLTGQVSNSNGGAGTTEAPNLLLVQSGATEELLTGPGPGEVGDSEAGAGVVQDVLFETLQTDEGLQSVLVLSGADGEQTRLCVQEVETLSPGLAEPAATGPSGQKLLIIRSAPATDLLENSSVAGGTTTLQLLAPSAPGPVSAPVGVPVAPPSQMVQVVPAVAGPGVMAPQNLPSIQIVQTLPAVQLVHTF.

Positions 1–31 (MAGSHVDMAPASTTEGTGEKPGPTAPAPTPA) are disordered. The segment covering 13-22 (TTEGTGEKPG) has biased composition (low complexity). 6 C2H2-type zinc fingers span residues 34–56 (YECG…QRTH), 62–84 (YKCP…QRGH), 90–112 (YQCP…RSVH), 118–140 (FTCG…LRQH), 146–168 (YPCP…RHVH), and 174–196 (YTCG…QRVH). A Phosphothreonine modification is found at Thr-197. The C2H2-type 7 zinc-finger motif lies at 202–224 (FRCPLCPKTFTHSSNLLLHHRTH). 2 disordered regions span residues 220-242 (HHRT…ETSR) and 254-273 (LQPR…PPVV). Composition is skewed to pro residues over residues 227 to 237 (APGPAPAPAPP) and 257 to 273 (RSPP…PPVV). C2H2-type zinc fingers lie at residues 346–368 (FACL…QHSH), 376–398 (FRCG…QQCH), 446–468 (YKCA…LRDH), 474–496 (YQCG…QRVH), 502–524 (FTCG…LRLH), 530–552 (YACT…RHVH), and 558–580 (HSCS…QRVH). The residue at position 581 (Thr-581) is a Phosphothreonine. C2H2-type zinc fingers lie at residues 586–608 (FRCP…QRTH) and 614–636 (FACP…LRTH). 2 disordered regions span residues 637–661 (TPAT…LAAA) and 717–763 (PSSV…AGQG). Positions 723 to 733 (PTPPPPPPPPK) are enriched in pro residues. The segment covering 734–756 (VILLPPASAGGPGSGAARPGPRS) has biased composition (low complexity). 4 consecutive repeat copies span residues 811–821 (VQLQPAQEVAT), 822–832 (VQLQPAQEVTT), 833–843 (VQLQPAQEVTT), and 844–854 (VQLQPLTGQVS). Residues 811–854 (VQLQPAQEVATVQLQPAQEVTTVQLQPAQEVTTVQLQPLTGQVS) are 4 X 11 AA tandem repeats of VQLQP-[AL]-[QT]-[EG]-[VQ]-[ATV]-[ST]. Residues 922 to 1038 (DGEQTRLCVQ…LPAVQLVHTF (117 aa)) form an interaction with TAF4B region.

Interacts with TAF4B. Expressed widely in testis, in both germline and somatic cells. Seems to have particularly strong expression in meiotic spermatocytes, postmeiotic round spermatids and Sertoli cells. Not detected in elongating spermatids or mature sperm (at protein level). Expressed in testis, ovary, spleen, lung, brain, liver and kidney. Expressed in D3 embryonic stem cells and F9 embryonal carcinoma cells.

It localises to the nucleus. Functionally, transcriptional activator. Binds DNA on GT-box consensus sequence 5'-TTGGTT-3'. Plays a role in spermiogenesis. This chain is Zinc finger protein 628, found in Mus musculus (Mouse).